The chain runs to 518 residues: Glutamate--cysteine ligase (518 aa).

This sequence belongs to the glutamate--cysteine ligase type 1 family. Type 1 subfamily.

The enzyme catalyses L-cysteine + L-glutamate + ATP = gamma-L-glutamyl-L-cysteine + ADP + phosphate + H(+). Its pathway is sulfur metabolism; glutathione biosynthesis; glutathione from L-cysteine and L-glutamate: step 1/2. The sequence is that of Glutamate--cysteine ligase from Salmonella typhi.